Consider the following 147-residue polypeptide: Plasminogen receptor (KT) (147 aa).

Over 1 to 52 the chain is Extracellular; the sequence is MGFIFSKSMNENMKNQQEFMVMHARLQLERQLIMQNEMRERQMAMQIAWSRE. The chain crosses the membrane as a helical span at residues 53-73; it reads FLKYFGTFFGIATISLAAGAI. Over 74–78 the chain is Cytoplasmic; that stretch reads KRKKP. The chain crosses the membrane as a helical span at residues 79 to 99; sequence AFLIPIVPLSFIFTYQYDLGY. Topologically, residues 100–147 are extracellular; sequence GTLLQRMKSEAEDILETEKTKLELPKGLITFESLEKARREQSKFFSDK.

In terms of assembly, interacts with PLAT. Interacts with PLAUR. As to expression, expressed in adrenal medulla (pheochromocytoma).

The protein resides in the cell membrane. Functionally, receptor for plasminogen. Regulates urokinase plasminogen activator-dependent and stimulates tissue-type plasminogen activator-dependent cell surface plasminogen activation. Proposed to be part of a local catecholaminergic cell plasminogen activation system that regulates neuroendocrine prohormone processing. Involved in regulation of inflammatory response; regulates monocyte chemotactic migration and matrix metalloproteinase activation, such as of MMP2 and MMP9. The sequence is that of Plasminogen receptor (KT) (Plgrkt) from Rattus norvegicus (Rat).